A 195-amino-acid chain; its full sequence is ATP-dependent Clp protease proteolytic subunit 1 (195 aa).

Catalysis depends on Ser96, which acts as the Nucleophile. His121 is an active-site residue.

Belongs to the peptidase S14 family. As to quaternary structure, fourteen ClpP subunits assemble into 2 heptameric rings which stack back to back to give a disk-like structure with a central cavity, resembling the structure of eukaryotic proteasomes.

It is found in the cytoplasm. The catalysed reaction is Hydrolysis of proteins to small peptides in the presence of ATP and magnesium. alpha-casein is the usual test substrate. In the absence of ATP, only oligopeptides shorter than five residues are hydrolyzed (such as succinyl-Leu-Tyr-|-NHMec, and Leu-Tyr-Leu-|-Tyr-Trp, in which cleavage of the -Tyr-|-Leu- and -Tyr-|-Trp bonds also occurs).. Its function is as follows. Cleaves peptides in various proteins in a process that requires ATP hydrolysis. Has a chymotrypsin-like activity. Plays a major role in the degradation of misfolded proteins. The protein is ATP-dependent Clp protease proteolytic subunit 1 of Prochlorococcus marinus (strain MIT 9312).